We begin with the raw amino-acid sequence, 389 residues long: Chalcone synthase 2 (389 aa).

Cysteine 164 is an active-site residue.

This sequence belongs to the thiolase-like superfamily. Chalcone/stilbene synthases family.

The enzyme catalyses (E)-4-coumaroyl-CoA + 3 malonyl-CoA + 3 H(+) = 2',4,4',6'-tetrahydroxychalcone + 3 CO2 + 4 CoA. It functions in the pathway secondary metabolite biosynthesis; flavonoid biosynthesis. Functionally, the primary product of this enzyme is 4,2',4',6'-tetrahydroxychalcone (also termed naringenin-chalcone or chalcone) which can under specific conditions spontaneously isomerize into naringenin. This chain is Chalcone synthase 2 (CHS2), found in Pisum sativum (Garden pea).